Consider the following 633-residue polypeptide: Probable sodium/potassium/calcium exchanger CG1090 (633 aa).

The first 21 residues, Met-1–Gly-21, serve as a signal peptide directing secretion. Topologically, residues Asp-22–His-111 are extracellular. Residues Gly-112–Cys-132 traverse the membrane as a helical segment. The Cytoplasmic portion of the chain corresponds to Asp-133–Thr-157. The Alpha-1 repeat unit spans residues Val-153 to Phe-193. A helical membrane pass occupies residues Phe-158–Ala-178. Residues Lys-179–Asp-181 lie on the Extracellular side of the membrane. A helical transmembrane segment spans residues Ile-182–Cys-202. At Ala-203 to Asp-220 the chain is on the cytoplasmic side. 2 helical membrane-spanning segments follow: residues Cys-221–Ser-241 and Cys-242–Asn-262. Residues Thr-263–Pro-427 lie on the Extracellular side of the membrane. Polar residues-rich tracts occupy residues Tyr-298–Lys-310, Ala-320–Asn-333, and Gln-395–Gly-405. The tract at residues Tyr-298 to Asp-422 is disordered. The span at Lys-411–Asp-422 shows a compositional bias: basic and acidic residues. The helical transmembrane segment at Met-428–Cys-448 threads the bilayer. The Cytoplasmic segment spans residues Lys-449–Phe-468. Residues Leu-469–Ile-489 traverse the membrane as a helical segment. The Extracellular portion of the chain corresponds to Gly-490 to Met-500. A helical transmembrane segment spans residues Gly-501 to Ile-521. Residues Ala-506–Asn-537 form an Alpha-2 repeat. Residues Lys-522–Gly-535 are Cytoplasmic-facing. Residues Ser-536–Ile-556 form a helical membrane-spanning segment. Residues Lys-557–Gly-568 are Extracellular-facing. The helical transmembrane segment at Leu-569–Leu-589 threads the bilayer. At Asn-590–Arg-597 the chain is on the cytoplasmic side. A helical transmembrane segment spans residues Leu-598–Leu-618. The Extracellular segment spans residues Asn-619–Tyr-633.

This sequence belongs to the Ca(2+):cation antiporter (CaCA) (TC 2.A.19) family. SLC24A subfamily.

Its subcellular location is the membrane. May function in the removal and maintenance of calcium homeostasis. Transports one Ca(2+) and 1 K(+) in exchange for 4 Na(+). The polypeptide is Probable sodium/potassium/calcium exchanger CG1090 (Drosophila melanogaster (Fruit fly)).